We begin with the raw amino-acid sequence, 1106 residues long: Solute carrier family 12 member 7 (1106 aa).

Residues 1–143 (MVYTALTWQR…PRESKAPCMG (143 aa)) lie on the Cytoplasmic side of the membrane. Positions 17 to 83 (GLVPSHLPQE…SPFIGSAAAD (67 aa)) are disordered. Phosphoserine is present on residues S74 and S86. The chain crosses the membrane as a discontinuously helical span at residues 144-166 (TFIGVYLPCLQNILGVILFLRLT). The K(+) site is built by N155 and I156. Residue V159 participates in chloride binding. At 167-173 (WIVGAAG) the chain is on the extracellular side. The helical transmembrane segment at 174–196 (VLESFLVVSMCCTCTMLTAVSMS) threads the bilayer. Residues 197 to 220 (AIATNGVVPAGGSYYMISRSLGPE) are Cytoplasmic-facing. The helical transmembrane segment at 221-249 (FGGAVGLCFYLGTTFAGAMYILGTIEIFL) threads the bilayer. Topologically, residues 250-273 (TYISPGAAVFQAETPEGEAAALLH) are extracellular. 2 helical membrane passes run 274–295 (NMRV…VGVK) and 296–324 (YVNK…KTAF). Residues 325-443 (DPPDIPVCLL…PYVLSDITTY (119 aa)) lie on the Extracellular side of the membrane. 3 N-linked (GlcNAc...) asparagine glycosylation sites follow: N336, N355, and N384. The helical transmembrane segment at 444–464 (FTVLVGIYFPSVTGIMAGSNR) threads the bilayer. Residues P453 and T456 each contribute to the K(+) site. A chloride-binding site is contributed by P453. G457 and I458 together coordinate chloride. Topologically, residues 465–474 (SGDLKDAQKS) are cytoplasmic. A helical transmembrane segment spans residues 475 to 497 (IPTGTILAIVTTSFIYLSCIVLF). The Extracellular portion of the chain corresponds to 498 to 528 (GACIEGVVLRDKFGEALQGNLVIGMLAWPSP). The helical transmembrane segment at 529–555 (WVIVIGSFFSTCGAGLQSLTGAPRLLQ) threads the bilayer. Topologically, residues 556 to 578 (AIARDGIVPFLQVFGHGKANGEP) are cytoplasmic. 2 consecutive transmembrane segments (helical) span residues 579–597 (TWAL…LIAS) and 598–622 (LDSV…ACAV). Y613 is a binding site for chloride. The Cytoplasmic portion of the chain corresponds to 623–636 (QTLLRTPNWRPRFK). Transmembrane regions (helical) follow at residues 637–659 (YYHW…ICSW) and 660–675 (YYAL…IYKY). Residues 676-1106 (IEYRGAEKEW…GGREVITIYS (431 aa)) are Cytoplasmic-facing. A scissor helix region spans residues 688-704 (GIRGLSLNAARYALLRV). The tract at residues 980–999 (RNTASHTAASRAQAPPTPDK) is disordered. 2 positions are modified to phosphothreonine: T996 and T1003.

This sequence belongs to the SLC12A transporter family. K/Cl co-transporter subfamily. In terms of assembly, homodimer; adopts a domain-swap conformation at the scissor helices connecting the transmembrane domain and C-terminal domain. Heterodimer with K-Cl cotransporter SLC12A5. As to expression, widely expressed. Higher levels in heart, kidney and lung (at protein level).

The protein resides in the cell membrane. It carries out the reaction K(+)(in) + chloride(in) = K(+)(out) + chloride(out). Activated by N-ethylmaleimide (NEM). Inhibited by furosemide, DIDS and bumetanide. The inhibition is much stronger in the presence of 50 mM K(+) in the uptake medium. Inhibited by DIOA. Inhibited by WNK3. Functionally, mediates electroneutral potassium-chloride cotransport when activated by cell swelling. May mediate K(+) uptake into Deiters' cells in the cochlea and contribute to K(+) recycling in the inner ear. Important for the survival of cochlear outer and inner hair cells and the maintenance of the organ of Corti. May be required for basolateral Cl(-) extrusion in the kidney and contribute to renal acidification. The protein is Solute carrier family 12 member 7 of Oryctolagus cuniculus (Rabbit).